The primary structure comprises 101 residues: Small ribosomal subunit protein bS18c (101 aa).

The segment covering 1 to 19 (MDKSKQPFRKSKRSFRRRL) has biased composition (basic residues). The segment at 1-26 (MDKSKQPFRKSKRSFRRRLPPIGSGD) is disordered.

It belongs to the bacterial ribosomal protein bS18 family. In terms of assembly, part of the 30S ribosomal subunit.

It localises to the plastid. It is found in the chloroplast. This Phalaenopsis aphrodite subsp. formosana (Moth orchid) protein is Small ribosomal subunit protein bS18c.